We begin with the raw amino-acid sequence, 61 residues long: Large ribosomal subunit protein bL32 (61 aa).

The segment covering M1–R16 has biased composition (basic residues). The segment at M1 to S33 is disordered.

The protein belongs to the bacterial ribosomal protein bL32 family.

The sequence is that of Large ribosomal subunit protein bL32 from Allorhizobium ampelinum (strain ATCC BAA-846 / DSM 112012 / S4) (Agrobacterium vitis (strain S4)).